A 569-amino-acid polypeptide reads, in one-letter code: Proline--tRNA ligase (569 aa).

It belongs to the class-II aminoacyl-tRNA synthetase family. ProS type 1 subfamily. As to quaternary structure, homodimer.

Its subcellular location is the cytoplasm. The catalysed reaction is tRNA(Pro) + L-proline + ATP = L-prolyl-tRNA(Pro) + AMP + diphosphate. Its function is as follows. Catalyzes the attachment of proline to tRNA(Pro) in a two-step reaction: proline is first activated by ATP to form Pro-AMP and then transferred to the acceptor end of tRNA(Pro). As ProRS can inadvertently accommodate and process non-cognate amino acids such as alanine and cysteine, to avoid such errors it has two additional distinct editing activities against alanine. One activity is designated as 'pretransfer' editing and involves the tRNA(Pro)-independent hydrolysis of activated Ala-AMP. The other activity is designated 'posttransfer' editing and involves deacylation of mischarged Ala-tRNA(Pro). The misacylated Cys-tRNA(Pro) is not edited by ProRS. The protein is Proline--tRNA ligase of Legionella pneumophila (strain Lens).